The following is a 2248-amino-acid chain: Putative Polycomb group protein ASXL3 (2248 aa).

The region spanning 10 to 84 (RTWAEAARLA…KSGLYALKKE (75 aa)) is the HTH HARE-type domain. The interval 156 to 232 (ALKQALRQQQ…GKQTSQHLKR (77 aa)) is disordered. Residues 203 to 216 (KNGEADSSDKEMKH) are compositionally biased toward basic and acidic residues. The segment covering 219–228 (KSPTGKQTSQ) has biased composition (polar residues). The DEUBAD domain occupies 254 to 363 (PGSILVNTNL…FERFYGEKLG (110 aa)). Disordered regions lie at residues 368–414 (ESVK…PASP), 547–583 (TSSM…EGQF), 607–643 (CISE…CTPA), 703–726 (EASP…PLTS), 762–853 (ERMA…ASIP), 869–1052 (LQRT…TGAR), 1123–1152 (TSKE…ETKM), 1183–1203 (QQSL…VHSS), 1431–1462 (KLSA…GFAP), 1573–1596 (TAPS…ADTT), and 1990–2068 (LSPN…KRLS). Composition is skewed to polar residues over residues 371-389 (KLTT…SCGT), 395-407 (SAQT…QPKS), 564-580 (AVET…SSLE), 607-617 (CISETSFSSES), and 624-643 (SLPS…CTPA). Polar residues predominate over residues 796 to 818 (NLTSQQKNLSNTPEPIIMSSSSI). Residues 937–949 (SHTSKSSEPSKSP) show a composition bias toward low complexity. Basic and acidic residues-rich tracts occupy residues 950–968 (DGIR…KTAE), 975–987 (CKEK…DDQS), and 997–1008 (PEKEQPPREEPR). Polar residues predominate over residues 1036–1046 (RASTSTSVSGG). Pro residues predominate over residues 2016–2046 (HPPPPPPPPPPPPLALPPPPPPPPPLPPPLP). The PHD-type; atypical zinc-finger motif lies at 2210 to 2247 (ELKCSCRLKAMIVCKGCGAFCHDDCIGPSKLCVACLVV).

Belongs to the Asx family. As to quaternary structure, core component of the polycomb repressive deubiquitinase (PR-DUB) complex, at least composed of BAP1, one of ASXL1, ASXL2 or (probably) ASXL3, and one of MBD5 or MBD6. Distinct combinations of ASXL and MBD proteins may preferentially bind specific histone modification marks. The PR-DUB core associates with a number of accessory proteins, including FOXK1, FOXK2, KDM1B, HCFC1 and OGT; KDM1B specifically associates with ASXL2 PR-DUB complexes. Interacts (via PHD domain) with MBD5 and MBD6 (via MBD domain); the interaction is probably direct and mediates association of MBD proteins with the PR-DUB core. Expressed in pancreatic islets, testis, neuroblastoma, head and neck tumor.

Its subcellular location is the nucleus. In terms of biological role, putative Polycomb group (PcG) protein. PcG proteins act by forming multiprotein complexes, which are required to maintain the transcriptionally repressive state of homeotic genes throughout development. PcG proteins are not required to initiate repression, but to maintain it during later stages of development. They probably act via methylation of histones, rendering chromatin heritably changed in its expressibility. Non-catalytic component of the PR-DUB complex, a complex that specifically mediates deubiquitination of histone H2A monoubiquitinated at 'Lys-119' (H2AK119ub1). The PR-DUB complex is an epigenetic regulator of gene expression and acts as a transcriptional coactivator, affecting genes involved in development, cell communication, signaling, cell proliferation and cell viability. ASXL1, ASXL2 and ASXL3 function redundantly in the PR-DUB complex and are essential for chromatin recruitment and transcriptional activation of associated genes. This Homo sapiens (Human) protein is Putative Polycomb group protein ASXL3 (ASXL3).